Here is a 312-residue protein sequence, read N- to C-terminus: Porphobilinogen deaminase (312 aa).

At Cys-241 the chain carries S-(dipyrrolylmethanemethyl)cysteine.

This sequence belongs to the HMBS family. In terms of assembly, monomer. The cofactor is dipyrromethane.

It catalyses the reaction 4 porphobilinogen + H2O = hydroxymethylbilane + 4 NH4(+). The protein operates within porphyrin-containing compound metabolism; protoporphyrin-IX biosynthesis; coproporphyrinogen-III from 5-aminolevulinate: step 2/4. Its pathway is porphyrin-containing compound metabolism; chlorophyll biosynthesis. In terms of biological role, tetrapolymerization of the monopyrrole PBG into the hydroxymethylbilane pre-uroporphyrinogen in several discrete steps. This Prosthecochloris aestuarii (strain DSM 271 / SK 413) protein is Porphobilinogen deaminase.